We begin with the raw amino-acid sequence, 284 residues long: Tropomyosin beta chain (284 aa).

Residue methionine 1 is modified to N-acetylmethionine. A coiled-coil region spans residues 1–284 (MEAIKKKMQM…DNALNDITSL (284 aa)). Composition is skewed to basic and acidic residues over residues 22–40 (AEQA…KQLE) and 51–66 (KGTE…SVKE). The disordered stretch occupies residues 22–66 (AEQAEADKKQAEDRCKQLEEEQQGLQKKLKGTEDEVEKYSESVKE).

The protein belongs to the tropomyosin family. As to quaternary structure, homodimer. Heterodimer of an alpha (TPM1, TPM3 or TPM4) and a beta (TPM2) chain.

It is found in the cytoplasm. Its subcellular location is the cytoskeleton. In terms of biological role, binds to actin filaments in muscle and non-muscle cells. Plays a central role, in association with the troponin complex, in the calcium dependent regulation of vertebrate striated muscle contraction. Smooth muscle contraction is regulated by interaction with caldesmon. In non-muscle cells is implicated in stabilizing cytoskeleton actin filaments. The polypeptide is Tropomyosin beta chain (TPM2) (Gallus gallus (Chicken)).